We begin with the raw amino-acid sequence, 20 residues long: Collagenolytic protease 36 kDa A (20 aa).

The 20-residue stretch at 1–20 (IVGGTEVTPGEIPYQLSLQD) folds into the Peptidase S1 domain. The interval 1 to 20 (IVGGTEVTPGEIPYQLSLQD) is disordered.

The protein belongs to the peptidase S1 family.

It catalyses the reaction Hydrolysis of proteins, with broad specificity for peptide bonds. Native collagen is cleaved about 75% of the length of the molecule from the N-terminus. Low activity on small molecule substrates of both trypsin and chymotrypsin.. Functionally, this enzyme is a serine protease capable of degrading the native triple helix of collagen. This chain is Collagenolytic protease 36 kDa A, found in Paralithodes camtschaticus (Red king crab).